The following is a 380-amino-acid chain: Chaperone protein DnaJ (380 aa).

A J domain is found at 5 to 70 (DYYEVLGVER…SKRAAYDQYG (66 aa)). Residues 139-217 (GTNVNIRVPT…CHGEGRVEES (79 aa)) form a CR-type zinc finger. Residues Cys152, Cys155, Cys169, Cys172, Cys191, Cys194, Cys205, and Cys208 each coordinate Zn(2+). 4 CXXCXGXG motif repeats span residues 152–159 (CKPCDGSG), 169–176 (CPTCGGIG), 191–198 (CPRCHGHG), and 205–212 (CDSCHGEG). The tract at residues 224 to 245 (VPPGVDTGDRIRLSGEGEAGTQ) is disordered.

Belongs to the DnaJ family. Homodimer. The cofactor is Zn(2+).

It localises to the cytoplasm. Participates actively in the response to hyperosmotic and heat shock by preventing the aggregation of stress-denatured proteins and by disaggregating proteins, also in an autonomous, DnaK-independent fashion. Unfolded proteins bind initially to DnaJ; upon interaction with the DnaJ-bound protein, DnaK hydrolyzes its bound ATP, resulting in the formation of a stable complex. GrpE releases ADP from DnaK; ATP binding to DnaK triggers the release of the substrate protein, thus completing the reaction cycle. Several rounds of ATP-dependent interactions between DnaJ, DnaK and GrpE are required for fully efficient folding. Also involved, together with DnaK and GrpE, in the DNA replication of plasmids through activation of initiation proteins. This chain is Chaperone protein DnaJ, found in Pseudomonas syringae pv. syringae (strain B728a).